Consider the following 967-residue polypeptide: RNA polymerase-associated protein RapA (967 aa).

The 171-residue stretch at 163–333 (EVGQRHAPRV…FARLRLLDPN (171 aa)) folds into the Helicase ATP-binding domain. ATP is bound at residue 176–183 (DEVGLGKT). Residues 279–282 (DEAH) carry the DEAH box motif. The region spanning 489-643 (RVEWLLNYLT…TCPTGRTIYD (155 aa)) is the Helicase C-terminal domain.

Belongs to the SNF2/RAD54 helicase family. RapA subfamily. Interacts with the RNAP. Has a higher affinity for the core RNAP than for the holoenzyme. Its ATPase activity is stimulated by binding to RNAP.

In terms of biological role, transcription regulator that activates transcription by stimulating RNA polymerase (RNAP) recycling in case of stress conditions such as supercoiled DNA or high salt concentrations. Probably acts by releasing the RNAP, when it is trapped or immobilized on tightly supercoiled DNA. Does not activate transcription on linear DNA. Probably not involved in DNA repair. This Pectobacterium carotovorum subsp. carotovorum (strain PC1) protein is RNA polymerase-associated protein RapA.